Here is a 166-residue protein sequence, read N- to C-terminus: Regulator of ribonuclease activity A (166 aa).

Belongs to the RraA family. As to quaternary structure, homotrimer. Binds to both RNA-binding sites in the C-terminal region of Rne and to RhlB.

The protein localises to the cytoplasm. Functionally, globally modulates RNA abundance by binding to RNase E (Rne) and regulating its endonucleolytic activity. Can modulate Rne action in a substrate-dependent manner by altering the composition of the degradosome. Modulates RNA-binding and helicase activities of the degradosome. In Actinobacillus succinogenes (strain ATCC 55618 / DSM 22257 / CCUG 43843 / 130Z), this protein is Regulator of ribonuclease activity A.